The primary structure comprises 242 residues: Small ribosomal subunit protein uS2 (242 aa).

This sequence belongs to the universal ribosomal protein uS2 family.

The chain is Small ribosomal subunit protein uS2 from Shewanella frigidimarina (strain NCIMB 400).